Here is a 941-residue protein sequence, read N- to C-terminus: Glycine dehydrogenase (decarboxylating) (941 aa).

An N6-(pyridoxal phosphate)lysine modification is found at Lys692.

Belongs to the GcvP family. As to quaternary structure, the glycine cleavage system is composed of four proteins: P, T, L and H. Requires pyridoxal 5'-phosphate as cofactor.

The catalysed reaction is N(6)-[(R)-lipoyl]-L-lysyl-[glycine-cleavage complex H protein] + glycine + H(+) = N(6)-[(R)-S(8)-aminomethyldihydrolipoyl]-L-lysyl-[glycine-cleavage complex H protein] + CO2. In terms of biological role, the glycine cleavage system catalyzes the degradation of glycine. The P protein binds the alpha-amino group of glycine through its pyridoxal phosphate cofactor; CO(2) is released and the remaining methylamine moiety is then transferred to the lipoamide cofactor of the H protein. This is Glycine dehydrogenase (decarboxylating) from Mycolicibacterium paratuberculosis (strain ATCC BAA-968 / K-10) (Mycobacterium paratuberculosis).